Here is a 1100-residue protein sequence, read N- to C-terminus: Collagen alpha-2(I) chain (1100 aa).

The disordered stretch occupies residues 1-982 (QYDGVKAPDP…PGPAGGGYDV (982 aa)). Low complexity-rich tracts occupy residues 122–170 (EPGA…AAGP), 200–209 (EPGPNGAVGP), and 216–237 (PGNNGLNGAKGAAGTPGVAGAP). The span at 239–249 (FPGPRGGPGPQ) shows a compositional bias: pro residues. Residues 251 to 261 (PQGAAGQRGLA) show a composition bias toward low complexity. Residues 268 to 277 (GVKGDGGPKG) show a composition bias toward gly residues. Composition is skewed to low complexity over residues 333-352 (MPGARGASGAAGPRGPPGDA), 358-385 (SGPAGLRGLPGSPGSSGPPGKEGAAGPA), 435-448 (APGPDGNNGATGAT), and 460-472 (QGASGAPGFQGLP). Residues 473-482 (GPAGGAGEAG) are compositionally biased toward gly residues. The span at 507–517 (NPGAAGASGPQ) shows a compositional bias: low complexity. The segment covering 530–557 (GTDGGKGEPGAAGAAGGPGHQGPGGMPG) has biased composition (gly residues). The span at 568-579 (KGEKGEGGHRGP) shows a compositional bias: basic and acidic residues. Residues 633–646 (PAGAPGFAGPPGAD) show a composition bias toward low complexity. Residues 656–665 (GPSGGKGESG) show a composition bias toward gly residues. 3 stretches are compositionally biased toward low complexity: residues 666–691 (PSGPAGPAGQSGPPGASGPAGPTGAR), 702–729 (FPGAAGRVGAAGPAGLVGPPGAAGPAGK), and 757–775 (SGEKGXPGTPGTSGPLGLQ). The span at 788 to 797 (GSPGGAGAVG) shows a compositional bias: gly residues. Composition is skewed to low complexity over residues 798–820 (EAGRVGPAGPAGARGAPGNLGLP) and 854–866 (AGPTGAAGRPGNR). Gly residues predominate over residues 867–876 (GESGPGGAAG). Residues 877–892 (AVGPAGARGAAGPSGP) show a composition bias toward low complexity. Over residues 893-907 (RGEKGVAGEKGERGM) the composition is skewed to basic and acidic residues. Residues 916-935 (LQGMPGPSGPSGDTGSAGPN) are compositionally biased toward low complexity. Residues 1071 to 1100 (TRLPLLDLAPLDLGGADQEFGLDLGPVCFK) form the Fibrillar collagen NC1 domain.

The protein belongs to the fibrillar collagen family.

The protein localises to the secreted. The protein resides in the extracellular space. It localises to the extracellular matrix. The polypeptide is Collagen alpha-2(I) chain (Epinephelus caninus (Dogtooth grouper)).